The primary structure comprises 159 residues: Transcription elongation factor GreA (159 aa).

Belongs to the GreA/GreB family.

Functionally, necessary for efficient RNA polymerase transcription elongation past template-encoded arresting sites. The arresting sites in DNA have the property of trapping a certain fraction of elongating RNA polymerases that pass through, resulting in locked ternary complexes. Cleavage of the nascent transcript by cleavage factors such as GreA or GreB allows the resumption of elongation from the new 3'terminus. GreA releases sequences of 2 to 3 nucleotides. The protein is Transcription elongation factor GreA of Buchnera aphidicola subsp. Cinara cedri (strain Cc).